Reading from the N-terminus, the 404-residue chain is Acetylornithine/succinyldiaminopimelate aminotransferase (404 aa).

Pyridoxal 5'-phosphate contacts are provided by residues 108–109 (GA) and F141. N(2)-acetyl-L-ornithine is bound at residue R144. 226-229 (DEIQ) is a pyridoxal 5'-phosphate binding site. K255 bears the N6-(pyridoxal phosphate)lysine mark. T283 contacts N(2)-acetyl-L-ornithine. Pyridoxal 5'-phosphate is bound at residue T284.

It belongs to the class-III pyridoxal-phosphate-dependent aminotransferase family. ArgD subfamily. Homodimer. It depends on pyridoxal 5'-phosphate as a cofactor.

It localises to the cytoplasm. The enzyme catalyses N(2)-acetyl-L-ornithine + 2-oxoglutarate = N-acetyl-L-glutamate 5-semialdehyde + L-glutamate. It carries out the reaction N-succinyl-(2S,6S)-2,6-diaminopimelate + 2-oxoglutarate = (S)-2-succinylamino-6-oxoheptanedioate + L-glutamate. The protein operates within amino-acid biosynthesis; L-arginine biosynthesis; N(2)-acetyl-L-ornithine from L-glutamate: step 4/4. It functions in the pathway amino-acid biosynthesis; L-lysine biosynthesis via DAP pathway; LL-2,6-diaminopimelate from (S)-tetrahydrodipicolinate (succinylase route): step 2/3. Involved in both the arginine and lysine biosynthetic pathways. The polypeptide is Acetylornithine/succinyldiaminopimelate aminotransferase (Buchnera aphidicola subsp. Schizaphis graminum (strain Sg)).